A 215-amino-acid polypeptide reads, in one-letter code: Large ribosomal subunit protein uL3 (215 aa).

Residues Lys124–Arg164 form a disordered region.

The protein belongs to the universal ribosomal protein uL3 family. In terms of assembly, part of the 50S ribosomal subunit. Forms a cluster with proteins L14 and L19.

In terms of biological role, one of the primary rRNA binding proteins, it binds directly near the 3'-end of the 23S rRNA, where it nucleates assembly of the 50S subunit. This Synechococcus sp. (strain RCC307) protein is Large ribosomal subunit protein uL3.